Consider the following 208-residue polypeptide: Imidazole glycerol phosphate synthase subunit HisH (208 aa).

In terms of domain architecture, Glutamine amidotransferase type-1 spans methionine 1–serine 206. Cysteine 79 acts as the Nucleophile in catalysis. Residues histidine 181 and glutamate 183 contribute to the active site.

As to quaternary structure, heterodimer of HisH and HisF.

It is found in the cytoplasm. The catalysed reaction is 5-[(5-phospho-1-deoxy-D-ribulos-1-ylimino)methylamino]-1-(5-phospho-beta-D-ribosyl)imidazole-4-carboxamide + L-glutamine = D-erythro-1-(imidazol-4-yl)glycerol 3-phosphate + 5-amino-1-(5-phospho-beta-D-ribosyl)imidazole-4-carboxamide + L-glutamate + H(+). The enzyme catalyses L-glutamine + H2O = L-glutamate + NH4(+). The protein operates within amino-acid biosynthesis; L-histidine biosynthesis; L-histidine from 5-phospho-alpha-D-ribose 1-diphosphate: step 5/9. Functionally, IGPS catalyzes the conversion of PRFAR and glutamine to IGP, AICAR and glutamate. The HisH subunit catalyzes the hydrolysis of glutamine to glutamate and ammonia as part of the synthesis of IGP and AICAR. The resulting ammonia molecule is channeled to the active site of HisF. The protein is Imidazole glycerol phosphate synthase subunit HisH of Listeria monocytogenes serovar 1/2a (strain ATCC BAA-679 / EGD-e).